Here is a 505-residue protein sequence, read N- to C-terminus: Lysine--tRNA ligase (505 aa).

2 residues coordinate Mg(2+): Glu-415 and Glu-422.

The protein belongs to the class-II aminoacyl-tRNA synthetase family. As to quaternary structure, homodimer. The cofactor is Mg(2+).

It localises to the cytoplasm. The enzyme catalyses tRNA(Lys) + L-lysine + ATP = L-lysyl-tRNA(Lys) + AMP + diphosphate. The protein is Lysine--tRNA ligase of Escherichia coli O157:H7.